The primary structure comprises 87 residues: MAKEELLELDGIVDEVLPDSKYRVTLENGVVVGAYASGRMRKNHIRILAGDRVTLELSVYDLTKGRINFRHKDANSPRPPRSGQPRR.

Residues 1–72 (MAKEELLELD…TKGRINFRHK (72 aa)) form the S1-like domain. The tract at residues 68–87 (NFRHKDANSPRPPRSGQPRR) is disordered. The segment covering 77-87 (PRPPRSGQPRR) has biased composition (pro residues).

The protein belongs to the IF-1 family. In terms of assembly, component of the 30S ribosomal translation pre-initiation complex which assembles on the 30S ribosome in the order IF-2 and IF-3, IF-1 and N-formylmethionyl-tRNA(fMet); mRNA recruitment can occur at any time during PIC assembly.

The protein localises to the cytoplasm. One of the essential components for the initiation of protein synthesis. Stabilizes the binding of IF-2 and IF-3 on the 30S subunit to which N-formylmethionyl-tRNA(fMet) subsequently binds. Helps modulate mRNA selection, yielding the 30S pre-initiation complex (PIC). Upon addition of the 50S ribosomal subunit IF-1, IF-2 and IF-3 are released leaving the mature 70S translation initiation complex. The sequence is that of Translation initiation factor IF-1 2 from Burkholderia cenocepacia (strain HI2424).